We begin with the raw amino-acid sequence, 126 residues long: Glycine cleavage system H protein (126 aa).

In terms of domain architecture, Lipoyl-binding spans 22 to 104; that stretch reads VATIGITEYA…YEKAWMVKIE (83 aa). Lys63 bears the N6-lipoyllysine mark.

Belongs to the GcvH family. In terms of assembly, the glycine cleavage system is composed of four proteins: P, T, L and H. Requires (R)-lipoate as cofactor.

The glycine cleavage system catalyzes the degradation of glycine. The H protein shuttles the methylamine group of glycine from the P protein to the T protein. In terms of biological role, is also involved in protein lipoylation via its role as an octanoyl/lipoyl carrier protein intermediate. The protein is Glycine cleavage system H protein of Staphylococcus epidermidis (strain ATCC 35984 / DSM 28319 / BCRC 17069 / CCUG 31568 / BM 3577 / RP62A).